Reading from the N-terminus, the 355-residue chain is uncharacterized protein (355 aa).

The protein belongs to the TmcAL family.

This is an uncharacterized protein from Methanocaldococcus jannaschii (strain ATCC 43067 / DSM 2661 / JAL-1 / JCM 10045 / NBRC 100440) (Methanococcus jannaschii).